The chain runs to 335 residues: Probable geranylgeranyl transferase type-2 subunit beta (335 aa).

PFTB repeat units lie at residues 74-115 (TEEI…IIFN), 122-163 (ADTI…HLLG), 170-211 (IDSA…AIAG), 218-259 (RDRT…AILG), and 266-312 (SDAM…DDTL). Geranylgeranyl diphosphate contacts are provided by residues 196 to 198 (HSG) and 238 to 250 (RPEK…YSWW). Zn(2+)-binding residues include Asp244, Cys246, and His296.

Belongs to the protein prenyltransferase subunit beta family. Heterodimer of an alpha and a beta subunit. Requires Zn(2+) as cofactor.

It catalyses the reaction geranylgeranyl diphosphate + L-cysteinyl-[protein] = S-geranylgeranyl-L-cysteinyl-[protein] + diphosphate. In terms of biological role, catalyzes the transfer of a geranyl-geranyl moiety from geranyl-geranyl pyrophosphate to both cysteines in Rab proteins with an -XXCC, -XCXC and -CCXX C-terminal. This Caenorhabditis elegans protein is Probable geranylgeranyl transferase type-2 subunit beta (ggtb-1).